Consider the following 271-residue polypeptide: Shikimate dehydrogenase (NADP(+)) (271 aa).

Shikimate contacts are provided by residues 14 to 16 (SLS) and Thr-61. The active-site Proton acceptor is Lys-65. Shikimate is bound by residues Asn-86 and Asp-101. Residues 125–129 (GAGGA) and Ile-212 contribute to the NADP(+) site. Tyr-214 serves as a coordination point for shikimate. Position 235 (Gly-235) interacts with NADP(+).

The protein belongs to the shikimate dehydrogenase family. Homodimer.

The catalysed reaction is shikimate + NADP(+) = 3-dehydroshikimate + NADPH + H(+). It functions in the pathway metabolic intermediate biosynthesis; chorismate biosynthesis; chorismate from D-erythrose 4-phosphate and phosphoenolpyruvate: step 4/7. Involved in the biosynthesis of the chorismate, which leads to the biosynthesis of aromatic amino acids. Catalyzes the reversible NADPH linked reduction of 3-dehydroshikimate (DHSA) to yield shikimate (SA). The sequence is that of Shikimate dehydrogenase (NADP(+)) from Clostridium perfringens (strain SM101 / Type A).